The primary structure comprises 574 residues: Cell division cycle 7-related protein kinase (574 aa).

Residue Ser27 is modified to Phosphoserine. Positions 58-574 (FKIEDKIGEG…LHPFFKDMSL (517 aa)) constitute a Protein kinase domain. ATP contacts are provided by residues 64–72 (IGEGTFSSV) and Lys90. Asp177 functions as the Proton acceptor in the catalytic mechanism. Lys268 participates in a covalent cross-link: Glycyl lysine isopeptide (Lys-Gly) (interchain with G-Cter in SUMO2). Residue Thr503 is modified to Phosphothreonine.

This sequence belongs to the protein kinase superfamily. Ser/Thr protein kinase family. CDC7 subfamily. Forms a complex with either DBF4/DBF4A or DBF4B, leading to the activation of the kinase activity. Interacts with CLASPIN (via the acidic patch); the interaction is required for phosphorylation of MCM proteins and CLASPIN. Requires Mg(2+) as cofactor.

It is found in the nucleus. The catalysed reaction is L-seryl-[protein] + ATP = O-phospho-L-seryl-[protein] + ADP + H(+). The enzyme catalyses L-threonyl-[protein] + ATP = O-phospho-L-threonyl-[protein] + ADP + H(+). Kinase involved in initiation of DNA replication. Phosphorylates critical substrates that regulate the G1/S phase transition and initiation of DNA replication, such as MCM proteins and CLASPIN. This chain is Cell division cycle 7-related protein kinase, found in Homo sapiens (Human).